Consider the following 775-residue polypeptide: Homeobox protein SIX4 (775 aa).

Residues 1–10 show a composition bias toward polar residues; that stretch reads MSSSSPTGQI. Disordered stretches follow at residues 1 to 76 and 263 to 313; these read MSSS…AGAA and WFKN…DGVT. At Ser-2 the chain carries N-acetylserine. Over residues 54–63 the composition is skewed to low complexity; sequence EPGDAAAASR. The homeobox DNA-binding region spans 216-275; the sequence is GEETVYCFKEKSRNALKELYKQNRYPSPAEKRHLAKITGLSLTQVSNWFKNRRQRDRNPS. 2 stretches are compositionally biased toward basic and acidic residues: residues 271–283 and 292–301; these read DRNP…KSES and ESSKGHEDLS. The tract at residues 582-775 is transactivation domain; sequence AQVNASLSSE…VQLDEDMQDL (194 aa). Ser-634 carries the post-translational modification Phosphoserine.

The protein belongs to the SIX/Sine oculis homeobox family. In terms of assembly, interacts with EYA3; acts cooperatively with EYA3 to transactivate target genes through interaction and nuclear translocation of EYA3 protein. As to expression, mainly expressed in the skeletal muscle (isoform 1 and isoform 2 but not isoform 3), and weakly in the heart. Also found in the retina and the distal tube of kidney. Expressed in skeletal muscle, nasal epithelium, cochlea, parathyroid and salivary gland. Expressed in muscle satellite cells of normal and regenerating muscles.

The protein resides in the nucleus. Its subcellular location is the cytoplasm. Transcriptional regulator which can act as both a transcriptional repressor and activator by binding a DNA sequence on these target genes and is involved in processes like cell differentiation, cell migration and cell survival. Transactivates gene expression by binding a 5'-[CAT]A[CT][CT][CTG]GA[GAT]-3' motif present in the Trex site and from a 5'-TCA[AG][AG]TTNC-3' motif present in the MEF3 site of the muscle-specific genes enhancer. Acts cooperatively with EYA proteins to transactivate their target genes through interaction and nuclear translocation of EYA protein. Acts synergistically with SIX1 to regulate target genes involved in formation of various organs, including muscle, kidney, gonad, ganglia, olfactory epithelium and cranial skeleton. Plays a role in several important steps of muscle development. Controls the genesis of hypaxial myogenic progenitors in the dermomyotome by transactivating PAX3 and the delamination and migration of the hypaxial precursors from the ventral lip to the limb buds through the transactivation of PAX3, MET and LBX1. Controls myoblast determination by transactivating MYF5, MYOD1 and MYF6. Controls somitic differentiation in myocyte through MYOG transactivation. Plays a role in synaptogenesis and sarcomere organization by participating in myofiber specialization during embryogenesis by activating fast muscle program in the primary myotome resulting in an up-regulation of fast muscle genes, including ATP2A1, MYL1 and TNNT3. Simultaneously, is also able to activate inhibitors of slow muscle genes, such as SOX6, HRASLS, and HDAC4, thereby restricting the activation of the slow muscle genes. During muscle regeneration, negatively regulates differentiation of muscle satellite cells through down-regulation of MYOG expression. During kidney development regulates the early stages of metanephros development and ureteric bud formation through regulation of GDNF, SALL1, PAX8 and PAX2 expression. Plays a role in gonad development by regulating both testis determination and size determination. In gonadal sex determination, transactivates ZFPM2 by binding a MEF3 consensus sequence, resulting in SRY up-regulation. In gonadal size determination, transactivates NR5A1 by binding a MEF3 consensus sequence resulting in gonadal precursor cell formation regulation. During olfactory development mediates the specification and patterning of olfactory placode through fibroblast growth factor and BMP4 signaling pathways and also regulates epithelial cell proliferation during placode formation. Promotes survival of sensory neurons during early trigeminal gangliogenesis. In the developing dorsal root ganglia, up-regulates SLC12A2 transcription. Regulates early thymus/parathyroid organogenesis through regulation of GCM2 and FOXN1 expression. Forms gustatory papillae during development of the tongue. Also plays a role during embryonic cranial skeleton morphogenesis. This chain is Homeobox protein SIX4 (Six4), found in Mus musculus (Mouse).